The primary structure comprises 467 residues: Multiple inositol polyphosphate phosphatase 1 (467 aa).

An N-terminal signal peptide occupies residues 1–15; that stretch reads MRLLILLLLPLVAIA. His67 is an active-site residue. N-linked (GlcNAc...) asparagine glycosylation is found at Asn120, Asn159, and Asn234. Residue Gly441 is the site of GPI-anchor amidated glycine attachment. The propeptide at 442–467 is removed in mature form; that stretch reads GAPSLGSGVGGLLATTLAAMLVYLMH.

It belongs to the histidine acid phosphatase family. MINPP1 subfamily. Post-translationally, N-glycosylated.

The protein localises to the cell membrane. It localises to the apical cell membrane. The protein resides in the basolateral cell membrane. Its subcellular location is the cell projection. It is found in the filopodium. The protein localises to the cell junction. The catalysed reaction is (2R)-2,3-bisphosphoglycerate + H2O = (2R)-2-phosphoglycerate + phosphate. The enzyme catalyses 1D-myo-inositol hexakisphosphate + H2O = 1D-myo-inositol 1,2,4,5,6-pentakisphosphate + phosphate. It carries out the reaction 1D-myo-inositol 1,2,4,5,6-pentakisphosphate + H2O = 1D-myo-inositol 1,2,5,6-tetrakisphosphate + phosphate. It catalyses the reaction 1D-myo-inositol 1,2,5,6-tetrakisphosphate + H2O = 1D-myo-inositol 1,2,6-trisphosphate + phosphate. Functionally, probable multiple inositol polyphosphate phosphatase that hydrolyzes 1D-myo-inositol 1,3,4,5,6-pentakisphosphate (InsP5[2OH]) and 1D-myo-inositol hexakisphosphate (InsP6) to a range of less phosphorylated inositol phosphates. This regulates the availability of these various small molecule second messengers and metal chelators which control many aspects of cell physiology. May have a dual substrate specificity, and function as a 2,3-bisphosphoglycerate 3-phosphatase hydrolyzing 2,3-bisphosphoglycerate to 2-phosphoglycerate. 2,3-bisphosphoglycerate (BPG) is formed as part of the Rapoport-Luebering glycolytic bypass. Has a role in embryonic tracheal development where it localizes to the leading edge of actively migrating branches. In these leading cells, enhances formation and/or maintenance of filopodia which may drive branch migration and elongation by cell-cell intercalation. The function in tracheal morphogenesis is dependent on its inositol polyphosphate phosphatase activity. This is Multiple inositol polyphosphate phosphatase 1 from Drosophila melanogaster (Fruit fly).